A 416-amino-acid polypeptide reads, in one-letter code: Putative competence-damage inducible protein (416 aa).

It belongs to the CinA family.

This chain is Putative competence-damage inducible protein, found in Bacillus pumilus (strain SAFR-032).